We begin with the raw amino-acid sequence, 876 residues long: Valine--tRNA ligase (876 aa).

The 'HIGH' region signature appears at 44 to 54 (PNVTGKLHLGH). The 'KMSKS' region motif lies at 520-524 (KMSKS). Lys523 provides a ligand contact to ATP. Residues 805–876 (LEGLIDMDKE…VKSRIEQLKA (72 aa)) adopt a coiled-coil conformation.

This sequence belongs to the class-I aminoacyl-tRNA synthetase family. ValS type 1 subfamily. As to quaternary structure, monomer.

Its subcellular location is the cytoplasm. The catalysed reaction is tRNA(Val) + L-valine + ATP = L-valyl-tRNA(Val) + AMP + diphosphate. In terms of biological role, catalyzes the attachment of valine to tRNA(Val). As ValRS can inadvertently accommodate and process structurally similar amino acids such as threonine, to avoid such errors, it has a 'posttransfer' editing activity that hydrolyzes mischarged Thr-tRNA(Val) in a tRNA-dependent manner. This Staphylococcus epidermidis (strain ATCC 35984 / DSM 28319 / BCRC 17069 / CCUG 31568 / BM 3577 / RP62A) protein is Valine--tRNA ligase.